The sequence spans 89 residues: Small ribosomal subunit protein uS15 (89 aa).

Belongs to the universal ribosomal protein uS15 family. In terms of assembly, part of the 30S ribosomal subunit. Forms a bridge to the 50S subunit in the 70S ribosome, contacting the 23S rRNA.

One of the primary rRNA binding proteins, it binds directly to 16S rRNA where it helps nucleate assembly of the platform of the 30S subunit by binding and bridging several RNA helices of the 16S rRNA. Its function is as follows. Forms an intersubunit bridge (bridge B4) with the 23S rRNA of the 50S subunit in the ribosome. This is Small ribosomal subunit protein uS15 from Anoxybacillus flavithermus (strain DSM 21510 / WK1).